The sequence spans 200 residues: NAD(P)H dehydrogenase (quinone) (200 aa).

A Flavodoxin-like domain is found at 4–191 (VLVLYYSSYG…DIARYQGKHV (188 aa)). Residues 10–15 (SSYGHV) and 79–81 (TRF) contribute to the FMN site. An NAD(+)-binding site is contributed by Tyr12. Trp99 contributes to the substrate binding site. FMN-binding positions include 114–120 (STGTQHG) and His135.

The protein belongs to the WrbA family. FMN serves as cofactor.

The enzyme catalyses a quinone + NADH + H(+) = a quinol + NAD(+). The catalysed reaction is a quinone + NADPH + H(+) = a quinol + NADP(+). The chain is NAD(P)H dehydrogenase (quinone) from Burkholderia multivorans (strain ATCC 17616 / 249).